Reading from the N-terminus, the 454-residue chain is Phosphoglucosamine mutase (454 aa).

S101 (phosphoserine intermediate) is an active-site residue. Residues S101, D243, D245, and D247 each coordinate Mg(2+). At S101 the chain carries Phosphoserine.

It belongs to the phosphohexose mutase family. Requires Mg(2+) as cofactor. In terms of processing, activated by phosphorylation.

It catalyses the reaction alpha-D-glucosamine 1-phosphate = D-glucosamine 6-phosphate. Catalyzes the conversion of glucosamine-6-phosphate to glucosamine-1-phosphate. This Geobacter sp. (strain M21) protein is Phosphoglucosamine mutase.